A 67-amino-acid polypeptide reads, in one-letter code: Protein AaeX (67 aa).

2 helical membrane passes run 3-23 (LFPV…ELLL) and 43-63 (FVWH…YLIS).

This sequence belongs to the AaeX family.

It is found in the cell membrane. This is Protein AaeX from Salmonella agona (strain SL483).